A 514-amino-acid polypeptide reads, in one-letter code: JmjC domain-containing histone demethylation protein 1 (514 aa).

A PHD-type zinc finger spans residues 4–62 (IDTCPICVESPLEDSTTFNNIAWLQCDICNQWFHASCLKIPKIEVNNLHSYHCEGCSKS). A JmjC domain is found at 220–384 (SDVDSFGKSF…MHLRIYEIEK (165 aa)). Residue T267 coordinates substrate. Residues H270 and D272 each coordinate Fe cation. K287 is a binding site for substrate. H352 is a binding site for Fe cation. Over residues 432–454 (KSEAHSRGEVHTKTETHAVKDEP) the composition is skewed to basic and acidic residues. The interval 432–456 (KSEAHSRGEVHTKTETHAVKDEPQP) is disordered.

Belongs to the JHDM1 histone demethylase family. The cofactor is Fe(2+).

The protein localises to the nucleus. The enzyme catalyses N(6),N(6)-dimethyl-L-lysyl(36)-[histone H3] + 2 2-oxoglutarate + 2 O2 = L-lysyl(36)-[histone H3] + 2 formaldehyde + 2 succinate + 2 CO2. In terms of biological role, histone demethylase that specifically demethylates 'Lys-36' of histone H3, thereby playing a central role in histone code. In Debaryomyces hansenii (strain ATCC 36239 / CBS 767 / BCRC 21394 / JCM 1990 / NBRC 0083 / IGC 2968) (Yeast), this protein is JmjC domain-containing histone demethylation protein 1 (JHD1).